A 373-amino-acid polypeptide reads, in one-letter code: Dual-specificity RNA methyltransferase RlmN (373 aa).

Glu-94 acts as the Proton acceptor in catalysis. Positions 100–339 (EDDRATLCVS…VIVRKTRGDD (240 aa)) constitute a Radical SAM core domain. An intrachain disulfide couples Cys-107 to Cys-344. [4Fe-4S] cluster-binding residues include Cys-114, Cys-118, and Cys-121. Residues 168–169 (GE), Ser-200, 222–224 (SIH), and Asn-301 each bind S-adenosyl-L-methionine. Catalysis depends on Cys-344, which acts as the S-methylcysteine intermediate.

It belongs to the radical SAM superfamily. RlmN family. It depends on [4Fe-4S] cluster as a cofactor.

It is found in the cytoplasm. The catalysed reaction is adenosine(2503) in 23S rRNA + 2 reduced [2Fe-2S]-[ferredoxin] + 2 S-adenosyl-L-methionine = 2-methyladenosine(2503) in 23S rRNA + 5'-deoxyadenosine + L-methionine + 2 oxidized [2Fe-2S]-[ferredoxin] + S-adenosyl-L-homocysteine. It carries out the reaction adenosine(37) in tRNA + 2 reduced [2Fe-2S]-[ferredoxin] + 2 S-adenosyl-L-methionine = 2-methyladenosine(37) in tRNA + 5'-deoxyadenosine + L-methionine + 2 oxidized [2Fe-2S]-[ferredoxin] + S-adenosyl-L-homocysteine. In terms of biological role, specifically methylates position 2 of adenine 2503 in 23S rRNA and position 2 of adenine 37 in tRNAs. m2A2503 modification seems to play a crucial role in the proofreading step occurring at the peptidyl transferase center and thus would serve to optimize ribosomal fidelity. The sequence is that of Dual-specificity RNA methyltransferase RlmN from Shewanella sp. (strain W3-18-1).